The sequence spans 499 residues: Maturase K (499 aa).

The protein belongs to the intron maturase 2 family. MatK subfamily.

The protein localises to the plastid. It localises to the chloroplast. Functionally, usually encoded in the trnK tRNA gene intron. Probably assists in splicing its own and other chloroplast group II introns. The polypeptide is Maturase K (Camellia sinensis (Tea plant)).